Reading from the N-terminus, the 299-residue chain is Acetylglutamate kinase (299 aa).

Residues 72-73 (GG), arginine 94, and asparagine 196 each bind substrate.

This sequence belongs to the acetylglutamate kinase family. ArgB subfamily.

Its subcellular location is the cytoplasm. The catalysed reaction is N-acetyl-L-glutamate + ATP = N-acetyl-L-glutamyl 5-phosphate + ADP. Its pathway is amino-acid biosynthesis; L-arginine biosynthesis; N(2)-acetyl-L-ornithine from L-glutamate: step 2/4. Functionally, catalyzes the ATP-dependent phosphorylation of N-acetyl-L-glutamate. This is Acetylglutamate kinase from Burkholderia ambifaria (strain MC40-6).